A 154-amino-acid polypeptide reads, in one-letter code: Snaclec agglucetin subunit alpha-1 (154 aa).

Residues 1–23 (MGRFIFVSFGLLVVFLSLSGTGA) form the signal peptide. Intrachain disulfides connect Cys27-Cys38, Cys55-Cys150, and Cys125-Cys142. Residues 34-151 (YDQSCYRVFK…CGSEYAFVCK (118 aa)) enclose the C-type lectin domain. A glycan (N-linked (GlcNAc...) asparagine) is linked at Asn116.

The protein belongs to the snaclec family. In terms of assembly, heterotetramer of the subunits alpha-1, alpha-2, beta-1 and beta-2; disulfide-linked. As to expression, expressed by the venom gland.

The protein localises to the secreted. Agglucetin specifically causes platelet aggregation and surface exposure of integrin alpha-IIb/beta-3 with a GPIb-(GP1BA-) dependent manner in washed platelets. It binds to human platelets in a saturable manner, and its binding is specifically blocked by anti-GP Ib mAb. It regulates endothelial cell survival and promotes angiogenesis by activating integrin alpha-v/beta-3 signaling through FAK/phosphatidylinositol 3-kinase (PI3K)/Akt pathway. In Deinagkistrodon acutus (Hundred-pace snake), this protein is Snaclec agglucetin subunit alpha-1.